The chain runs to 157 residues: RNA pyrophosphohydrolase (157 aa).

In terms of domain architecture, Nudix hydrolase spans 6-149; that stretch reads SYRPNVAAVI…KRKVYRRVID (144 aa). The short motif at 43–64 is the Nudix box element; the sequence is GGIDEGETPEDALYRELLEEIG.

The protein belongs to the Nudix hydrolase family. RppH subfamily. A divalent metal cation serves as cofactor.

Its function is as follows. Accelerates the degradation of transcripts by removing pyrophosphate from the 5'-end of triphosphorylated RNA, leading to a more labile monophosphorylated state that can stimulate subsequent ribonuclease cleavage. The protein is RNA pyrophosphohydrolase of Sulfurovum sp. (strain NBC37-1).